Consider the following 861-residue polypeptide: DNA mismatch repair protein MutS (861 aa).

Position 613 to 620 (613 to 620) interacts with ATP; the sequence is GPNMGGKS.

It belongs to the DNA mismatch repair MutS family.

Its function is as follows. This protein is involved in the repair of mismatches in DNA. It is possible that it carries out the mismatch recognition step. This protein has a weak ATPase activity. In Dichelobacter nodosus (strain VCS1703A), this protein is DNA mismatch repair protein MutS.